The following is a 268-amino-acid chain: MTAPREPFFPVDRSIRASDEPLEIRRLGRMGYQEAWDLQAEIAAARAAGTQGDVILVVEHPNVYTAGKRTQPEDMPDNGLPVIDVDRGGRITWHGEGQLVVYPIIKLAEPVDVVDYVRRLEEAIIQAVRELGVSTAGRIDGRSGVWVPSTTQAADPAAPKRDRKLGALGIRVTRGVTMHGLALNCTNTLEYYEHIVACGIDDADVSTLSLELGREVTMEEAEAPLLDALLKALSGELTVADHTFASAPDPIKVANEKARQARKAAQEK.

A BPL/LPL catalytic domain is found at 49-237 (GTQGDVILVV…ALLKALSGEL (189 aa)). Residues 87-94 (RGGRITWH), 167-169 (ALG), and 180-182 (GLA) contribute to the substrate site. The Acyl-thioester intermediate role is filled by cysteine 198.

Belongs to the LipB family.

It is found in the cytoplasm. The enzyme catalyses octanoyl-[ACP] + L-lysyl-[protein] = N(6)-octanoyl-L-lysyl-[protein] + holo-[ACP] + H(+). The protein operates within protein modification; protein lipoylation via endogenous pathway; protein N(6)-(lipoyl)lysine from octanoyl-[acyl-carrier-protein]: step 1/2. Its function is as follows. Catalyzes the transfer of endogenously produced octanoic acid from octanoyl-acyl-carrier-protein onto the lipoyl domains of lipoate-dependent enzymes. Lipoyl-ACP can also act as a substrate although octanoyl-ACP is likely to be the physiological substrate. The protein is Octanoyltransferase of Corynebacterium aurimucosum (strain ATCC 700975 / DSM 44827 / CIP 107346 / CN-1) (Corynebacterium nigricans).